The chain runs to 745 residues: 1,4-alpha-glucan branching enzyme GlgB (745 aa).

Aspartate 416 (nucleophile) is an active-site residue. The active-site Proton donor is glutamate 469.

The protein belongs to the glycosyl hydrolase 13 family. GlgB subfamily. As to quaternary structure, monomer.

It catalyses the reaction Transfers a segment of a (1-&gt;4)-alpha-D-glucan chain to a primary hydroxy group in a similar glucan chain.. The protein operates within glycan biosynthesis; glycogen biosynthesis. Catalyzes the formation of the alpha-1,6-glucosidic linkages in glycogen by scission of a 1,4-alpha-linked oligosaccharide from growing alpha-1,4-glucan chains and the subsequent attachment of the oligosaccharide to the alpha-1,6 position. This is 1,4-alpha-glucan branching enzyme GlgB from Shewanella sp. (strain MR-7).